A 1133-amino-acid polypeptide reads, in one-letter code: Trafficking protein particle complex subunit 11 (1133 aa).

Lys245 is modified (N6-acetyllysine).

It belongs to the TRAPPC11 family. In terms of assembly, component of the multisubunit TRAPP (transport protein particle) complex, which includes at least TRAPPC2, TRAPPC2L, TRAPPC3, TRAPPC3L, TRAPPC4, TRAPPC5, TRAPPC8, TRAPPC9, TRAPPC10, TRAPPC11 and TRAPPC12.

Its subcellular location is the golgi apparatus. The protein resides in the cis-Golgi network. Involved in endoplasmic reticulum to Golgi apparatus trafficking at a very early stage. This Bos taurus (Bovine) protein is Trafficking protein particle complex subunit 11 (TRAPPC11).